We begin with the raw amino-acid sequence, 458 residues long: Argininosuccinate lyase (458 aa).

Belongs to the lyase 1 family. Argininosuccinate lyase subfamily.

Its subcellular location is the cytoplasm. The enzyme catalyses 2-(N(omega)-L-arginino)succinate = fumarate + L-arginine. Its pathway is amino-acid biosynthesis; L-arginine biosynthesis; L-arginine from L-ornithine and carbamoyl phosphate: step 3/3. This chain is Argininosuccinate lyase, found in Geobacter metallireducens (strain ATCC 53774 / DSM 7210 / GS-15).